Here is a 427-residue protein sequence, read N- to C-terminus: Glutamate-1-semialdehyde 2,1-aminomutase (427 aa).

Lysine 265 carries the N6-(pyridoxal phosphate)lysine modification.

This sequence belongs to the class-III pyridoxal-phosphate-dependent aminotransferase family. HemL subfamily. As to quaternary structure, homodimer. The cofactor is pyridoxal 5'-phosphate.

The protein localises to the cytoplasm. It carries out the reaction (S)-4-amino-5-oxopentanoate = 5-aminolevulinate. It functions in the pathway porphyrin-containing compound metabolism; protoporphyrin-IX biosynthesis; 5-aminolevulinate from L-glutamyl-tRNA(Glu): step 2/2. The chain is Glutamate-1-semialdehyde 2,1-aminomutase from Burkholderia cenocepacia (strain HI2424).